The chain runs to 569 residues: Membrane protein insertase YidC (569 aa).

A helical transmembrane segment spans residues 6 to 26; that stretch reads FVLFLIFATSLLFLWDAWQKE. Composition is skewed to polar residues over residues 32–52 and 62–74; these read QGPKTAVQGTETQANTGTAGT and LASSVPQRGSTAE. The disordered stretch occupies residues 32 to 81; the sequence is QGPKTAVQGTETQANTGTAGTAETPVPGDQLASSVPQRGSTAENGAPVRA. 5 helical membrane passes run 348-368, 375-395, 442-462, 479-499, and 519-539; these read VVDYGWLTVIGAPLFWLLSLF, WGVAIILLTMSVKLAFFPLSA, GGCLPILVQIPVFISLYWVLL, LSAPDPYYVLPVIMGISMFLQ, and PLAFSVFFFFFPAGLVLYSLV.

It belongs to the OXA1/ALB3/YidC family. Type 1 subfamily. Interacts with the Sec translocase complex via SecD. Specifically interacts with transmembrane segments of nascent integral membrane proteins during membrane integration.

The protein localises to the cell inner membrane. Functionally, required for the insertion and/or proper folding and/or complex formation of integral membrane proteins into the membrane. Involved in integration of membrane proteins that insert both dependently and independently of the Sec translocase complex, as well as at least some lipoproteins. Aids folding of multispanning membrane proteins. The polypeptide is Membrane protein insertase YidC (Nitrosospira multiformis (strain ATCC 25196 / NCIMB 11849 / C 71)).